Here is a 255-residue protein sequence, read N- to C-terminus: Hydroxyacylglutathione hydrolase (255 aa).

Positions 56, 58, 60, 61, 114, 133, and 171 each coordinate Zn(2+).

This sequence belongs to the metallo-beta-lactamase superfamily. Glyoxalase II family. In terms of assembly, monomer. Zn(2+) serves as cofactor.

The catalysed reaction is an S-(2-hydroxyacyl)glutathione + H2O = a 2-hydroxy carboxylate + glutathione + H(+). The protein operates within secondary metabolite metabolism; methylglyoxal degradation; (R)-lactate from methylglyoxal: step 2/2. In terms of biological role, thiolesterase that catalyzes the hydrolysis of S-D-lactoyl-glutathione to form glutathione and D-lactic acid. This Rhodopseudomonas palustris (strain BisA53) protein is Hydroxyacylglutathione hydrolase.